The primary structure comprises 200 residues: Protein-methionine-sulfoxide reductase heme-binding subunit MsrQ (200 aa).

Transmembrane regions (helical) follow at residues 8–28, 54–74, 79–99, 116–136, and 153–173; these read ITWL…WLFY, LLLA…PLLI, LLGL…SLLE, PYLT…LTSF, and FIYL…KILS.

Belongs to the MsrQ family. Heterodimer of a catalytic subunit (MsrP) and a heme-binding subunit (MsrQ). FMN serves as cofactor. The cofactor is heme b.

The protein localises to the cell inner membrane. In terms of biological role, part of the MsrPQ system that repairs oxidized periplasmic proteins containing methionine sulfoxide residues (Met-O), using respiratory chain electrons. Thus protects these proteins from oxidative-stress damage caused by reactive species of oxygen and chlorine generated by the host defense mechanisms. MsrPQ is essential for the maintenance of envelope integrity under bleach stress, rescuing a wide series of structurally unrelated periplasmic proteins from methionine oxidation. MsrQ provides electrons for reduction to the reductase catalytic subunit MsrP, using the quinone pool of the respiratory chain. The protein is Protein-methionine-sulfoxide reductase heme-binding subunit MsrQ of Cronobacter sakazakii (strain ATCC BAA-894) (Enterobacter sakazakii).